Consider the following 529-residue polypeptide: Bifunctional purine biosynthesis protein PurH (529 aa).

The region spanning glutamine 2–valine 148 is the MGS-like domain.

Belongs to the PurH family.

The enzyme catalyses (6R)-10-formyltetrahydrofolate + 5-amino-1-(5-phospho-beta-D-ribosyl)imidazole-4-carboxamide = 5-formamido-1-(5-phospho-D-ribosyl)imidazole-4-carboxamide + (6S)-5,6,7,8-tetrahydrofolate. The catalysed reaction is IMP + H2O = 5-formamido-1-(5-phospho-D-ribosyl)imidazole-4-carboxamide. It participates in purine metabolism; IMP biosynthesis via de novo pathway; 5-formamido-1-(5-phospho-D-ribosyl)imidazole-4-carboxamide from 5-amino-1-(5-phospho-D-ribosyl)imidazole-4-carboxamide (10-formyl THF route): step 1/1. The protein operates within purine metabolism; IMP biosynthesis via de novo pathway; IMP from 5-formamido-1-(5-phospho-D-ribosyl)imidazole-4-carboxamide: step 1/1. The protein is Bifunctional purine biosynthesis protein PurH of Photorhabdus laumondii subsp. laumondii (strain DSM 15139 / CIP 105565 / TT01) (Photorhabdus luminescens subsp. laumondii).